The following is a 116-amino-acid chain: Putative pterin-4-alpha-carbinolamine dehydratase (116 aa).

It belongs to the pterin-4-alpha-carbinolamine dehydratase family.

The enzyme catalyses (4aS,6R)-4a-hydroxy-L-erythro-5,6,7,8-tetrahydrobiopterin = (6R)-L-erythro-6,7-dihydrobiopterin + H2O. The protein is Putative pterin-4-alpha-carbinolamine dehydratase of Xylella fastidiosa (strain 9a5c).